Reading from the N-terminus, the 273-residue chain is Putative phosphoenolpyruvate synthase regulatory protein (273 aa).

153-160 provides a ligand contact to ADP; it reads GVSRCGKT.

This sequence belongs to the pyruvate, phosphate/water dikinase regulatory protein family. PSRP subfamily.

The catalysed reaction is [pyruvate, water dikinase] + ADP = [pyruvate, water dikinase]-phosphate + AMP + H(+). The enzyme catalyses [pyruvate, water dikinase]-phosphate + phosphate + H(+) = [pyruvate, water dikinase] + diphosphate. Bifunctional serine/threonine kinase and phosphorylase involved in the regulation of the phosphoenolpyruvate synthase (PEPS) by catalyzing its phosphorylation/dephosphorylation. This is Putative phosphoenolpyruvate synthase regulatory protein from Pectobacterium atrosepticum (strain SCRI 1043 / ATCC BAA-672) (Erwinia carotovora subsp. atroseptica).